Reading from the N-terminus, the 148-residue chain is Large ribosomal subunit protein uL15 (148 aa).

The segment covering 1-12 (MSEPIKLHDLRP) has biased composition (basic and acidic residues). A disordered region spans residues 1–52 (MSEPIKLHDLRPAKGANKPKTRVGRGEASKGKTAGRGTKGTKARKQVSAAFE).

This sequence belongs to the universal ribosomal protein uL15 family. As to quaternary structure, part of the 50S ribosomal subunit.

In terms of biological role, binds to the 23S rRNA. This Corynebacterium diphtheriae (strain ATCC 700971 / NCTC 13129 / Biotype gravis) protein is Large ribosomal subunit protein uL15.